Consider the following 339-residue polypeptide: MNALNAAMTVIGAGSYGTALAITLARNGHHVVLWGHDPKHIATLQHDRCNAAFLPDVPFPDTLHLESDLATALAASRDILIVVPSHVFGQVLRQIKPLMRPDARLVWATKGLEAETGRLLQDVAREALGDDIPLAVISGPTFAKELAAGLPTAISLAATDPQFAEDLQHLLHCGKSFRVYINPDFIGVQLGGAVKNVIAIGAGMSDGIGFGANARTALITRGLVEMSRLGAALGADPETFMGMAGLGDLVLTCTDNQSRNRRFGMMLGQGMDVQSAQDKIGQVVEGYRNTKEVRVLAQRLGVEMPITEEIYQVLYCGKIAREAALTLLGRARKDERSSN.

4 residues coordinate NADPH: Ser-15, Tyr-16, His-36, and Lys-110. 3 residues coordinate sn-glycerol 3-phosphate: Lys-110, Gly-139, and Thr-141. Ala-143 provides a ligand contact to NADPH. Positions 195, 248, 258, 259, and 260 each coordinate sn-glycerol 3-phosphate. Lys-195 serves as the catalytic Proton acceptor. Residue Arg-259 coordinates NADPH. 2 residues coordinate NADPH: Val-283 and Glu-285.

Belongs to the NAD-dependent glycerol-3-phosphate dehydrogenase family.

Its subcellular location is the cytoplasm. The catalysed reaction is sn-glycerol 3-phosphate + NAD(+) = dihydroxyacetone phosphate + NADH + H(+). It catalyses the reaction sn-glycerol 3-phosphate + NADP(+) = dihydroxyacetone phosphate + NADPH + H(+). The protein operates within membrane lipid metabolism; glycerophospholipid metabolism. In terms of biological role, catalyzes the reduction of the glycolytic intermediate dihydroxyacetone phosphate (DHAP) to sn-glycerol 3-phosphate (G3P), the key precursor for phospholipid synthesis. This chain is Glycerol-3-phosphate dehydrogenase [NAD(P)+], found in Klebsiella pneumoniae (strain 342).